A 360-amino-acid polypeptide reads, in one-letter code: D-alanine--D-alanine ligase (360 aa).

The region spanning 139 to 344 (KDVFAQAGLA…YPELIEKLVS (206 aa)) is the ATP-grasp domain. 172–227 (EQVLGYPCFVKPANMGSSVGISKCRSKEELQTAFDLAFQYDRRVVVEEGVVGREIE) serves as a coordination point for ATP. The Mg(2+) site is built by Asp298, Glu311, and Asn313.

It belongs to the D-alanine--D-alanine ligase family. It depends on Mg(2+) as a cofactor. Mn(2+) is required as a cofactor.

The protein localises to the cytoplasm. It catalyses the reaction 2 D-alanine + ATP = D-alanyl-D-alanine + ADP + phosphate + H(+). Its pathway is cell wall biogenesis; peptidoglycan biosynthesis. In terms of biological role, cell wall formation. This is D-alanine--D-alanine ligase from Bacillus pumilus (strain SAFR-032).